A 185-amino-acid polypeptide reads, in one-letter code: MIDEALFDAEEKMEKAVAVARDDLSTIRTGRANPGMFSRITIDYYGAATPITQLASINVPEARLVVIKPYEANQLRAIETAIRNSDLGVNPTNDGALIRVAVPQLTEERRRELVKQAKHKGEEAKVSVRNIRRKAMEELHRIRKEGEAGEDEVGRAEKDLDKTTHQYVTQIDELVKHKEGELLEV.

Residues 144–164 (KEGEAGEDEVGRAEKDLDKTT) are disordered.

It belongs to the RRF family.

It is found in the cytoplasm. In terms of biological role, responsible for the release of ribosomes from messenger RNA at the termination of protein biosynthesis. May increase the efficiency of translation by recycling ribosomes from one round of translation to another. This is Ribosome-recycling factor from Mycobacterium tuberculosis (strain CDC 1551 / Oshkosh).